The primary structure comprises 241 residues: Ribonuclease HII (241 aa).

Positions 27-227 (GPVAGVDEAG…REARSLRLED (201 aa)) constitute an RNase H type-2 domain. Positions 33, 34, and 128 each coordinate a divalent metal cation.

The protein belongs to the RNase HII family. Requires Mn(2+) as cofactor. It depends on Mg(2+) as a cofactor.

Its subcellular location is the cytoplasm. It carries out the reaction Endonucleolytic cleavage to 5'-phosphomonoester.. Functionally, endonuclease that specifically degrades the RNA of RNA-DNA hybrids. This is Ribonuclease HII from Frankia alni (strain DSM 45986 / CECT 9034 / ACN14a).